The sequence spans 67 residues: DNA-directed RNA polymerase subunit omega (67 aa).

It belongs to the RNA polymerase subunit omega family. In terms of assembly, the RNAP catalytic core consists of 2 alpha, 1 beta, 1 beta' and 1 omega subunit. When a sigma factor is associated with the core the holoenzyme is formed, which can initiate transcription.

The enzyme catalyses RNA(n) + a ribonucleoside 5'-triphosphate = RNA(n+1) + diphosphate. In terms of biological role, promotes RNA polymerase assembly. Latches the N- and C-terminal regions of the beta' subunit thereby facilitating its interaction with the beta and alpha subunits. The protein is DNA-directed RNA polymerase subunit omega of Dictyoglomus turgidum (strain DSM 6724 / Z-1310).